Reading from the N-terminus, the 238-residue chain is Small ribosomal subunit protein uS2c (238 aa).

It belongs to the universal ribosomal protein uS2 family.

Its subcellular location is the plastid. It localises to the chloroplast. In Nuphar advena (Common spatterdock), this protein is Small ribosomal subunit protein uS2c (rps2).